A 117-amino-acid chain; its full sequence is Large ribosomal subunit protein bL20 (117 aa).

It belongs to the bacterial ribosomal protein bL20 family.

Its function is as follows. Binds directly to 23S ribosomal RNA and is necessary for the in vitro assembly process of the 50S ribosomal subunit. It is not involved in the protein synthesizing functions of that subunit. The protein is Large ribosomal subunit protein bL20 of Glaesserella parasuis serovar 5 (strain SH0165) (Haemophilus parasuis).